The sequence spans 186 residues: Ribosome-recycling factor (186 aa).

It belongs to the RRF family.

Its subcellular location is the cytoplasm. Functionally, responsible for the release of ribosomes from messenger RNA at the termination of protein biosynthesis. May increase the efficiency of translation by recycling ribosomes from one round of translation to another. This Polaromonas naphthalenivorans (strain CJ2) protein is Ribosome-recycling factor.